Reading from the N-terminus, the 856-residue chain is DNA mismatch repair protein MutS (856 aa).

ATP is bound at residue 618 to 625; it reads GPNMGGKS.

It belongs to the DNA mismatch repair MutS family.

In terms of biological role, this protein is involved in the repair of mismatches in DNA. It is possible that it carries out the mismatch recognition step. This protein has a weak ATPase activity. This Shewanella putrefaciens (strain CN-32 / ATCC BAA-453) protein is DNA mismatch repair protein MutS.